A 246-amino-acid chain; its full sequence is Transmembrane and ubiquitin-like domain-containing protein 1 (246 aa).

Positions 2–30 are required to release iHOPS from membranes; that stretch reads TLIEGVGDEVTVLFSVLACLLVLALAWVS. Residues 11 to 31 traverse the membrane as a helical segment; the sequence is VTVLFSVLACLLVLALAWVST. The interval 34–101 is disordered; it reads AEGGDPLPQP…TPPAPDSPQE (68 aa). A compositionally biased stretch (pro residues) spans 40–50; that stretch reads LPQPSGTPTPS. A Phosphothreonine modification is found at Thr-71. Position 73 is a phosphoserine (Ser-73). Thr-92 is modified (phosphothreonine). Phosphoserine is present on residues Ser-98 and Ser-127. Residues 103 to 176 form the Ubiquitin-like domain; that stretch reads LVLRLKFLND…LHCHVSTRVG (74 aa). A run of 2 helical transmembrane segments spans residues 195–215 and 221–241; these read IGSL…YCQI and FPLT…LLAF.

As to quaternary structure, interacts with EEF1A1, GRIA2, GRIP1, CAMLG, TUBG1. Interacts with NPM1 and CDKN2A; TMUB1 can enhance interaction between NPM1 and CDKN2A and is proposed to bridge the proteins; proposed to be mediated by iHOPS. Interacts with ERLIN2 and AMFR; TMUB1 promotes the interaction of ERLIN2 with AMFR. In terms of processing, processed by regulated intramembrane proteolysis (RIP)in the N-terminus to release iHOPS from membranes. As to expression, ubiquitously expressed with highest levels in mammary and thyroid glands, bone marrow and spleen; limited expression in cardiac, pancreatic and ovarian tissues.

It is found in the membrane. It localises to the postsynaptic cell membrane. The protein resides in the recycling endosome. Its subcellular location is the cytoplasm. The protein localises to the nucleus. It is found in the nucleolus. It localises to the cytoskeleton. The protein resides in the microtubule organizing center. Its subcellular location is the centrosome. Its function is as follows. Involved in sterol-regulated ubiquitination and degradation of HMG-CoA reductase HMGCR. Involved in positive regulation of AMPA-selective glutamate receptor GRIA2 recycling to the cell surface. Acts as a negative regulator of hepatocyte growth during regeneration. May contribute to the regulation of translation during cell-cycle progression. May contribute to the regulation of cell proliferation. May be involved in centrosome assembly. Modulates stabilization and nucleolar localization of tumor suppressor CDKN2A and enhances association between CDKN2A and NPM1. In Homo sapiens (Human), this protein is Transmembrane and ubiquitin-like domain-containing protein 1 (TMUB1).